The chain runs to 219 residues: MNRYELAQKIDHTLLRPNISLLDIERLCNEAKEFGFYSVCINPYYIPYAKELLKDTKVKICTVIDFPLGASTTSMKVYQVRESLKLGAEEFDMVINIGALKDKKRDYLISEIREVVKAAEGKVVKVIIETCYLTDEEKIYATEIIKEGGAHFVKTSTGFGPQGATVQDVRLLKSIAGNDLKVKASGGIRTFEQALEMINAGADRIGTSSGVSIINGLGK.

Catalysis depends on Asp92, which acts as the Proton donor/acceptor. Lys154 acts as the Schiff-base intermediate with acetaldehyde in catalysis. Lys183 (proton donor/acceptor) is an active-site residue.

Belongs to the DeoC/FbaB aldolase family. DeoC type 1 subfamily.

Its subcellular location is the cytoplasm. It catalyses the reaction 2-deoxy-D-ribose 5-phosphate = D-glyceraldehyde 3-phosphate + acetaldehyde. It functions in the pathway carbohydrate degradation; 2-deoxy-D-ribose 1-phosphate degradation; D-glyceraldehyde 3-phosphate and acetaldehyde from 2-deoxy-alpha-D-ribose 1-phosphate: step 2/2. In terms of biological role, catalyzes a reversible aldol reaction between acetaldehyde and D-glyceraldehyde 3-phosphate to generate 2-deoxy-D-ribose 5-phosphate. This chain is Deoxyribose-phosphate aldolase, found in Dictyoglomus turgidum (strain DSM 6724 / Z-1310).